A 313-amino-acid chain; its full sequence is Cyclin-dependent kinase B2-1 (313 aa).

Methionine 1 bears the N-acetylmethionine mark. Positions 14–304 (FEKLEKVGEG…AKMAMEHPYF (291 aa)) constitute a Protein kinase domain. ATP is bound by residues 20–28 (VGEGTYGKV) and lysine 43. Phosphotyrosine is present on tyrosine 25. Catalysis depends on aspartate 145, which acts as the Proton acceptor. Threonine 179 bears the Phosphothreonine mark.

Belongs to the protein kinase superfamily. CMGC Ser/Thr protein kinase family. CDC2/CDKX subfamily. In terms of assembly, interacts with CYCD4-1 and CKS1. In terms of tissue distribution, expressed in root tips, shoot apical meristem, leaf primordia vascular tissues and tapetum of anthers.

The enzyme catalyses L-seryl-[protein] + ATP = O-phospho-L-seryl-[protein] + ADP + H(+). It carries out the reaction L-threonyl-[protein] + ATP = O-phospho-L-threonyl-[protein] + ADP + H(+). The catalysed reaction is [DNA-directed RNA polymerase] + ATP = phospho-[DNA-directed RNA polymerase] + ADP + H(+). This is Cyclin-dependent kinase B2-1 (CDKB2-1) from Arabidopsis thaliana (Mouse-ear cress).